The following is a 92-amino-acid chain: Small ribosomal subunit protein uS19 (92 aa).

The protein belongs to the universal ribosomal protein uS19 family.

Functionally, protein S19 forms a complex with S13 that binds strongly to the 16S ribosomal RNA. This chain is Small ribosomal subunit protein uS19, found in Nitrobacter hamburgensis (strain DSM 10229 / NCIMB 13809 / X14).